We begin with the raw amino-acid sequence, 418 residues long: Serine hydroxymethyltransferase (418 aa).

Residues Leu121 and 125-127 (GHL) each bind (6S)-5,6,7,8-tetrahydrofolate. An N6-(pyridoxal phosphate)lysine modification is found at Lys230. 356-358 (SPF) contacts (6S)-5,6,7,8-tetrahydrofolate.

It belongs to the SHMT family. Homodimer. Pyridoxal 5'-phosphate serves as cofactor.

It is found in the cytoplasm. It catalyses the reaction (6R)-5,10-methylene-5,6,7,8-tetrahydrofolate + glycine + H2O = (6S)-5,6,7,8-tetrahydrofolate + L-serine. It participates in one-carbon metabolism; tetrahydrofolate interconversion. The protein operates within amino-acid biosynthesis; glycine biosynthesis; glycine from L-serine: step 1/1. Catalyzes the reversible interconversion of serine and glycine with tetrahydrofolate (THF) serving as the one-carbon carrier. This reaction serves as the major source of one-carbon groups required for the biosynthesis of purines, thymidylate, methionine, and other important biomolecules. Also exhibits THF-independent aldolase activity toward beta-hydroxyamino acids, producing glycine and aldehydes, via a retro-aldol mechanism. The polypeptide is Serine hydroxymethyltransferase (Shewanella sediminis (strain HAW-EB3)).